The chain runs to 977 residues: 2-oxoglutarate dehydrogenase E1 component (977 aa).

One can recognise an RPE1 insert domain in the interval 77 to 125 (VLNNRHLAKPAYREEFKGDTERSTAAYIDIREDASTGSTSKLPLEAKFG).

It belongs to the alpha-ketoglutarate dehydrogenase family. In terms of assembly, homodimer. Part of the 2-oxoglutarate dehydrogenase (OGDH) complex composed of E1 (2-oxoglutarate dehydrogenase), E2 (dihydrolipoamide succinyltransferase) and E3 (dihydrolipoamide dehydrogenase); the complex contains multiple copies of the three enzymatic components (E1, E2 and E3). It depends on thiamine diphosphate as a cofactor.

The catalysed reaction is N(6)-[(R)-lipoyl]-L-lysyl-[protein] + 2-oxoglutarate + H(+) = N(6)-[(R)-S(8)-succinyldihydrolipoyl]-L-lysyl-[protein] + CO2. In terms of biological role, E1 component of the 2-oxoglutarate dehydrogenase (OGDH) complex which catalyzes the decarboxylation of 2-oxoglutarate, the first step in the conversion of 2-oxoglutarate to succinyl-CoA and CO(2). In Rickettsia felis (strain ATCC VR-1525 / URRWXCal2) (Rickettsia azadi), this protein is 2-oxoglutarate dehydrogenase E1 component (sucA).